Reading from the N-terminus, the 249-residue chain is Nicotinamide/nicotinic acid mononucleotide adenylyltransferase (249 aa).

NAD(+) is bound by residues Ser-34 and Phe-35. His-42 and Lys-75 together coordinate ATP. The NAD(+) site is built by Thr-112, Gly-141, Asp-143, Trp-154, Arg-173, and Asn-204. Position 209–210 (209–210 (SR)) interacts with ATP.

This sequence belongs to the eukaryotic NMN adenylyltransferase family. The cofactor is a divalent metal cation.

It carries out the reaction beta-nicotinamide D-ribonucleotide + ATP + H(+) = diphosphate + NAD(+). It catalyses the reaction nicotinate beta-D-ribonucleotide + ATP + H(+) = deamido-NAD(+) + diphosphate. The protein operates within cofactor biosynthesis; NAD(+) biosynthesis; deamido-NAD(+) from nicotinate D-ribonucleotide: step 1/1. It participates in cofactor biosynthesis; NAD(+) biosynthesis; NAD(+) from nicotinamide D-ribonucleotide: step 1/1. Catalyzes the formation of NAD(+) from nicotinamide mononucleotide (NMN) and ATP. Can also use the deamidated form; nicotinic acid mononucleotide (NaMN) as substrate. This Oryza sativa subsp. japonica (Rice) protein is Nicotinamide/nicotinic acid mononucleotide adenylyltransferase.